Reading from the N-terminus, the 568-residue chain is 4-hydroxy-7-methoxy-3-oxo-3,4-dihydro-2H-1,4-benzoxazin-2-yl glucoside beta-D-glucosidase, chloroplastic (568 aa).

The N-terminal 50 residues, 1–50, are a transit peptide targeting the chloroplast; sequence MALLVGGTLNPTTHLSLRSRAGRNSENVWLRSAASSQTSKGRFCNLTVRA. A beta-D-glucoside-binding positions include Q92, H194, and 239-240; that span reads NE. E240 acts as the Proton donor in catalysis. A disulfide bond links C259 and C265. A beta-D-glucoside is bound by residues Y383, E456, W504, 511–512, and F520; that span reads EW. E456 serves as the catalytic Nucleophile.

It belongs to the glycosyl hydrolase 1 family. Homohexamer. Expressed in seedlings, mesocotyl, coleoptile, leaf sheath, and roots.

The protein resides in the plastid. The protein localises to the chloroplast. The catalysed reaction is DIMBOA beta-D-glucoside + H2O = DIMBOA + D-glucose. It carries out the reaction DIBOA beta-D-glucoside + H2O = DIBOA + D-glucose. It catalyses the reaction Hydrolysis of terminal, non-reducing beta-D-glucosyl residues with release of beta-D-glucose.. Its activity is regulated as follows. Inhibited by castanospermine, Ag(+) and Cu(2+). 34% inhibition by Zn(2+) and not affected by EDTA. Involved in defense of young plant parts against pests via the production of benzoxazolinones (hydroxamic acids) from hydroxamic acid glucosides. The preferred substrate is DIBOA-beta-D-glucoside. Can also use esculin and genistein glucoside as substrates, but no activity with salicin, p-nitrophenyl-alpha-glucoside or substrates related to cell wall components. This Secale cereale (Rye) protein is 4-hydroxy-7-methoxy-3-oxo-3,4-dihydro-2H-1,4-benzoxazin-2-yl glucoside beta-D-glucosidase, chloroplastic.